The primary structure comprises 202 residues: MIGYLRGRLHLVTPEGILLETGGIGWLVRTVTNRSWPAPGTEIAVYTQLVVREDAMELYGFTRPEELHLFTLLRGVNGIGPRGALQILGAAKPEQLSRAIAAGDSAFLTALPGIGAKKAQRLLLELKDAVLKSGLVDGTETEAIPAGGGDNDEALAALLALGYSREEIGPILARVRQELGNAAPTTAVLQAVLKTFGRGGGD.

Residues 1 to 62 are domain I; sequence MIGYLRGRLH…EDAMELYGFT (62 aa). Residues 63–141 form a domain II region; it reads RPEELHLFTL…KSGLVDGTET (79 aa). The tract at residues 141 to 145 is flexible linker; it reads TEAIP. Residues 146-202 are domain III; sequence AGGGDNDEALAALLALGYSREEIGPILARVRQELGNAAPTTAVLQAVLKTFGRGGGD.

This sequence belongs to the RuvA family. Homotetramer. Forms an RuvA(8)-RuvB(12)-Holliday junction (HJ) complex. HJ DNA is sandwiched between 2 RuvA tetramers; dsDNA enters through RuvA and exits via RuvB. An RuvB hexamer assembles on each DNA strand where it exits the tetramer. Each RuvB hexamer is contacted by two RuvA subunits (via domain III) on 2 adjacent RuvB subunits; this complex drives branch migration. In the full resolvosome a probable DNA-RuvA(4)-RuvB(12)-RuvC(2) complex forms which resolves the HJ.

Its subcellular location is the cytoplasm. Functionally, the RuvA-RuvB-RuvC complex processes Holliday junction (HJ) DNA during genetic recombination and DNA repair, while the RuvA-RuvB complex plays an important role in the rescue of blocked DNA replication forks via replication fork reversal (RFR). RuvA specifically binds to HJ cruciform DNA, conferring on it an open structure. The RuvB hexamer acts as an ATP-dependent pump, pulling dsDNA into and through the RuvAB complex. HJ branch migration allows RuvC to scan DNA until it finds its consensus sequence, where it cleaves and resolves the cruciform DNA. This Moorella thermoacetica (strain ATCC 39073 / JCM 9320) protein is Holliday junction branch migration complex subunit RuvA.